Reading from the N-terminus, the 523-residue chain is Bifunctional purine biosynthesis protein PurH (523 aa).

The MGS-like domain maps to 1 to 150 (MSDVVPVRNA…KNHGDVAIAT (150 aa)).

The protein belongs to the PurH family.

It catalyses the reaction (6R)-10-formyltetrahydrofolate + 5-amino-1-(5-phospho-beta-D-ribosyl)imidazole-4-carboxamide = 5-formamido-1-(5-phospho-D-ribosyl)imidazole-4-carboxamide + (6S)-5,6,7,8-tetrahydrofolate. It carries out the reaction IMP + H2O = 5-formamido-1-(5-phospho-D-ribosyl)imidazole-4-carboxamide. It functions in the pathway purine metabolism; IMP biosynthesis via de novo pathway; 5-formamido-1-(5-phospho-D-ribosyl)imidazole-4-carboxamide from 5-amino-1-(5-phospho-D-ribosyl)imidazole-4-carboxamide (10-formyl THF route): step 1/1. It participates in purine metabolism; IMP biosynthesis via de novo pathway; IMP from 5-formamido-1-(5-phospho-D-ribosyl)imidazole-4-carboxamide: step 1/1. This Rhodopirellula baltica (strain DSM 10527 / NCIMB 13988 / SH1) protein is Bifunctional purine biosynthesis protein PurH.